The following is a 260-amino-acid chain: Glutamate racemase (260 aa).

Substrate contacts are provided by residues 14-15 (DS) and 46-47 (YG). Cysteine 77 functions as the Proton donor/acceptor in the catalytic mechanism. Residue 78 to 79 (NT) participates in substrate binding. Catalysis depends on cysteine 188, which acts as the Proton donor/acceptor. 189–190 (TH) contributes to the substrate binding site.

This sequence belongs to the aspartate/glutamate racemases family.

It carries out the reaction L-glutamate = D-glutamate. The protein operates within cell wall biogenesis; peptidoglycan biosynthesis. Provides the (R)-glutamate required for cell wall biosynthesis. The protein is Glutamate racemase of Clostridium perfringens (strain SM101 / Type A).